Here is a 217-residue protein sequence, read N- to C-terminus: MOB kinase activator-like 2 (217 aa).

The interval 15–38 (GKESIRGNYKPKKHPRGSSRHTMR) is disordered. Residues 23–38 (YKPKKHPRGSSRHTMR) show a composition bias toward basic residues. Zn(2+)-binding residues include cysteine 89, cysteine 94, histidine 167, and histidine 172.

This sequence belongs to the MOB1/phocein family.

The sequence is that of MOB kinase activator-like 2 (mob2) from Dictyostelium discoideum (Social amoeba).